The sequence spans 703 residues: Protein teflon (703 aa).

The C2H2-type 1 zinc-finger motif lies at 32-55 (MFCHFCKDIFTHLPEFMRHLQWSH). 3 disordered regions span residues 78–111 (TSED…PGSS), 138–161 (SHEQ…ARKP), and 339–434 (SQQP…SKLE). Polar residues-rich tracts occupy residues 84 to 94 (QSQANSCSSGD) and 138 to 147 (SHEQSYSKTP). Residues 148 to 161 (PDSRTEGFRCARKP) are compositionally biased toward basic and acidic residues. Composition is skewed to polar residues over residues 339–352 (SQQP…NNAV) and 364–373 (SLTVISSSPI). 2 C2H2-type zinc fingers span residues 649–672 (YFCE…QSVH) and 677–700 (FTCS…KTVH).

It belongs to the Teflon family.

The protein localises to the nucleus. It is found in the chromosome. Functionally, specifically required in males for proper segregation of autosomal bivalents at meiosis I. Expression is required in the male germ line prior to spermatocyte stage S4. May have a role as a bridging molecule maintaining adhesion to hold autosome bivalents together via heterochromatic connections. This Drosophila pseudoobscura pseudoobscura (Fruit fly) protein is Protein teflon.